A 181-amino-acid chain; its full sequence is HGPRTase-like protein 2 (181 aa).

It belongs to the purine/pyrimidine phosphoribosyltransferase family. Archaeal HPRT subfamily.

In terms of biological role, may catalyze a purine salvage reaction, the substrate is unknown. The protein is HGPRTase-like protein 2 of Haloterrigena turkmenica (strain ATCC 51198 / DSM 5511 / JCM 9101 / NCIMB 13204 / VKM B-1734 / 4k) (Halococcus turkmenicus).